The chain runs to 85 residues: UPF0335 protein WP0746 (85 aa).

Belongs to the UPF0335 family.

The sequence is that of UPF0335 protein WP0746 from Wolbachia pipientis subsp. Culex pipiens (strain wPip).